A 447-amino-acid chain; its full sequence is Phosphoglucosamine mutase (447 aa).

Ser-102 acts as the Phosphoserine intermediate in catalysis. Ser-102, Asp-241, Asp-243, and Asp-245 together coordinate Mg(2+). Position 102 is a phosphoserine (Ser-102).

This sequence belongs to the phosphohexose mutase family. Mg(2+) serves as cofactor. In terms of processing, activated by phosphorylation.

The enzyme catalyses alpha-D-glucosamine 1-phosphate = D-glucosamine 6-phosphate. Its function is as follows. Catalyzes the conversion of glucosamine-6-phosphate to glucosamine-1-phosphate. This is Phosphoglucosamine mutase from Pseudomonas syringae pv. tomato (strain ATCC BAA-871 / DC3000).